Consider the following 705-residue polypeptide: GATOR2 complex protein WDR24 (705 aa).

WD repeat units follow at residues 1 to 28, 34 to 74, 77 to 117, 121 to 161, 165 to 207, and 211 to 254; these read MDEN…RNKQ, EHKR…SVST, GQSE…RYER, AHNG…AKEI, QTIA…IPSA, and EHKD…IDRA. Residues 633 to 655 form a C4-type zinc finger; it reads NCSNCKRPMSNRGWICDRCRQCA. C634, C637, C648, C651, C658, C661, C672, C675, H677, H680, H683, C694, C698, H700, and C702 together coordinate Zn(2+). The RING-type; atypical zinc-finger motif lies at 656 to 705; it reads SMCAVCHHVVKGLFVWCQGCSHGGHLQHIMKWLETSSHCPAGCGHLCEYT.

The protein belongs to the WD repeat WDR24 family. In terms of assembly, component of the GATOR2 subcomplex, composed of MIOS, SEC13, SEH1L, WDR24 and WDR59. The GATOR2 complex interacts with CASTOR1 and CASTOR2; the interaction is negatively regulated by arginine. The GATOR2 complex interacts with SESN1, SESN2 and SESN3; the interaction is negatively regulated by amino acids.

The protein resides in the lysosome membrane. It carries out the reaction S-ubiquitinyl-[E2 ubiquitin-conjugating enzyme]-L-cysteine + [acceptor protein]-L-lysine = [E2 ubiquitin-conjugating enzyme]-L-cysteine + N(6)-ubiquitinyl-[acceptor protein]-L-lysine.. Its pathway is protein modification; protein ubiquitination. The GATOR2 complex is negatively regulated by the upstream amino acid sensors CASTOR1 and SESN2, which sequester the GATOR2 complex in absence of amino acids. In the presence of abundant amino acids, GATOR2 is released from CASTOR1 and SESN2 and activated. Its function is as follows. Catalytic component of the GATOR2 complex, a multiprotein complex that acts as an activator of the amino acid-sensing branch of the mTORC1 signaling pathway. The GATOR2 complex indirectly activates mTORC1 through the inhibition of the GATOR1 subcomplex. GATOR2 probably acts as an E3 ubiquitin-protein ligase toward GATOR1. In the presence of abundant amino acids, the GATOR2 complex mediates ubiquitination of the NPRL2 core component of the GATOR1 complex, leading to GATOR1 inactivation. In the absence of amino acids, GATOR2 is inhibited, activating the GATOR1 complex. In addition to its role in regulation of the mTORC1 complex, promotes the acidification of lysosomes and facilitates autophagic flux. Within the GATOR2 complex, WDR24 constitutes the catalytic subunit that mediates 'Lys-6'-linked ubiquitination of NPRL2. The sequence is that of GATOR2 complex protein WDR24 from Gallus gallus (Chicken).